The chain runs to 300 residues: Inosose dehydratase (300 aa).

It belongs to the IolE/MocC family. The cofactor is glutathione. Requires Co(2+) as cofactor. Mn(2+) serves as cofactor.

It carries out the reaction scyllo-inosose = 3D-3,5/4-trihydroxycyclohexane-1,2-dione + H2O. Catalyzes the dehydration of inosose (2-keto-myo-inositol, 2KMI or 2,4,6/3,5-pentahydroxycyclohexanone) to 3D-(3,5/4)-trihydroxycyclohexane-1,2-dione (D-2,3-diketo-4-deoxy-epi-inositol). The protein is Inosose dehydratase of Mesomycoplasma hyopneumoniae (strain 232) (Mycoplasma hyopneumoniae).